We begin with the raw amino-acid sequence, 184 residues long: Adenine phosphoribosyltransferase (184 aa).

This sequence belongs to the purine/pyrimidine phosphoribosyltransferase family. In terms of assembly, homodimer.

Its subcellular location is the cytoplasm. It catalyses the reaction AMP + diphosphate = 5-phospho-alpha-D-ribose 1-diphosphate + adenine. It functions in the pathway purine metabolism; AMP biosynthesis via salvage pathway; AMP from adenine: step 1/1. Functionally, catalyzes a salvage reaction resulting in the formation of AMP, that is energically less costly than de novo synthesis. The sequence is that of Adenine phosphoribosyltransferase from Myxococcus xanthus (strain DK1622).